Reading from the N-terminus, the 369-residue chain is 3-dehydroquinate synthase (369 aa).

NAD(+) is bound by residues 78 to 83 (DGERYK), 112 to 116 (GVIGD), 136 to 137 (TT), lysine 149, lysine 158, and 176 to 179 (TLTT). 3 residues coordinate Zn(2+): glutamate 191, histidine 254, and histidine 271.

The protein belongs to the sugar phosphate cyclases superfamily. Dehydroquinate synthase family. The cofactor is NAD(+). Requires Co(2+) as cofactor. Zn(2+) is required as a cofactor.

It is found in the cytoplasm. It carries out the reaction 7-phospho-2-dehydro-3-deoxy-D-arabino-heptonate = 3-dehydroquinate + phosphate. Its pathway is metabolic intermediate biosynthesis; chorismate biosynthesis; chorismate from D-erythrose 4-phosphate and phosphoenolpyruvate: step 2/7. Catalyzes the conversion of 3-deoxy-D-arabino-heptulosonate 7-phosphate (DAHP) to dehydroquinate (DHQ). The chain is 3-dehydroquinate synthase from Nitrosomonas europaea (strain ATCC 19718 / CIP 103999 / KCTC 2705 / NBRC 14298).